The chain runs to 481 residues: Glutamyl-tRNA(Gln) amidotransferase subunit A (481 aa).

Active-site charge relay system residues include K76 and S151. The active-site Acyl-ester intermediate is the S175.

The protein belongs to the amidase family. GatA subfamily. Heterotrimer of A, B and C subunits.

It carries out the reaction L-glutamyl-tRNA(Gln) + L-glutamine + ATP + H2O = L-glutaminyl-tRNA(Gln) + L-glutamate + ADP + phosphate + H(+). In terms of biological role, allows the formation of correctly charged Gln-tRNA(Gln) through the transamidation of misacylated Glu-tRNA(Gln) in organisms which lack glutaminyl-tRNA synthetase. The reaction takes place in the presence of glutamine and ATP through an activated gamma-phospho-Glu-tRNA(Gln). In Neisseria meningitidis serogroup B (strain ATCC BAA-335 / MC58), this protein is Glutamyl-tRNA(Gln) amidotransferase subunit A.